Consider the following 358-residue polypeptide: Putative zinc metalloprotease RC0203 (358 aa).

Histidine 18 is a binding site for Zn(2+). Glutamate 19 is an active-site residue. Histidine 22 is a Zn(2+) binding site. The next 4 membrane-spanning stretches (helical) occupy residues 52–71 (GVRWKICLIPLGGYVKIYGY), 97–119 (FLIVAAGPLINYLLAIIIFAGFY), 285–307 (YLLFIAMLSVNLGLLNLLPIPVL), and 332–351 (ILLQLGAIIIIFLIIIAVSN). Residues 102-186 (AGPLINYLLA…STLTIERKSE (85 aa)) form the PDZ domain.

The protein belongs to the peptidase M50B family. Zn(2+) is required as a cofactor.

The protein resides in the cell inner membrane. The sequence is that of Putative zinc metalloprotease RC0203 from Rickettsia conorii (strain ATCC VR-613 / Malish 7).